A 447-amino-acid polypeptide reads, in one-letter code: Methyl-coenzyme M reductase I subunit beta (447 aa).

Tyr-371 contributes to the coenzyme M binding site. Residue Gly-373 coordinates coenzyme B.

It belongs to the methyl-coenzyme M reductase beta subunit family. As to quaternary structure, MCR is a hexamer of two alpha, two beta, and two gamma chains, forming a dimer of heterotrimers. The cofactor is coenzyme F430.

The protein localises to the cytoplasm. The catalysed reaction is coenzyme B + methyl-coenzyme M = methane + coenzyme M-coenzyme B heterodisulfide. It functions in the pathway one-carbon metabolism; methyl-coenzyme M reduction; methane from methyl-coenzyme M: step 1/1. Functionally, component of the methyl-coenzyme M reductase (MCR) I that catalyzes the reductive cleavage of methyl-coenzyme M (CoM-S-CH3 or 2-(methylthio)ethanesulfonate) using coenzyme B (CoB or 7-mercaptoheptanoylthreonine phosphate) as reductant which results in the production of methane and the mixed heterodisulfide of CoB and CoM (CoM-S-S-CoB). This is the final step in methanogenesis. This Methanocaldococcus jannaschii (strain ATCC 43067 / DSM 2661 / JAL-1 / JCM 10045 / NBRC 100440) (Methanococcus jannaschii) protein is Methyl-coenzyme M reductase I subunit beta (mcrB).